A 212-amino-acid polypeptide reads, in one-letter code: Cyclin-dependent kinase 2-interacting protein (212 aa).

M1 is modified (N-acetylmethionine). Phosphoserine is present on residues S69 and S73. The stretch at 73-107 (SKENEEKVCLEYNEELEKLCEELQATLDGLTKIQV) forms a coiled coil. A Na(+)-binding site is contributed by S202.

Belongs to the CINP family. Homodimer. Part of the 55LCC heterohexameric ATPase complex composed at least of AIRIM, AFG2A, AFG2B and CINP. Interacts with AIRIM. Interacts with CDK2 and CDC7. Interacts with the components of the replication complex, MCM2, MCM3, MCM4, MCM5, MCM6, MCM7 and with ORC2-containing complexes. Interacts with ATRIP. Interacts with CEP152. Associates with pre-60S ribosomal particles. In terms of processing, phosphorylated by CDC7 but not by CDK2.

The protein localises to the nucleus. Component of the DNA replication complex, which interacts with two kinases, CDK2 and CDC7, thereby providing a functional and physical link between CDK2 and CDC7 during firing of the origins of replication. Regulates ATR-mediated checkpoint signaling in response to DNA damage. Part of the 55LCC heterohexameric ATPase complex which is chromatin-associated and promotes replisome proteostasis to maintain replication fork progression and genome stability. Required for replication fork progression, sister chromatid cohesion, and chromosome stability. The ATPase activity is specifically enhanced by replication fork DNA and is coupled to cysteine protease-dependent cleavage of replisome substrates in response to replication fork damage. Uses ATPase activity to process replisome substrates in S-phase, facilitating their proteolytic turnover from chromatin to ensure DNA replication and mitotic fidelity. As part of 55LCC complex, also involved in the cytoplasmic maturation steps of pre-60S ribosomal particles by promoting the release of shuttling protein RSL24D1/RLP24 from the pre-ribosomal particles. This chain is Cyclin-dependent kinase 2-interacting protein, found in Homo sapiens (Human).